A 230-amino-acid chain; its full sequence is N-(5'-phosphoribosyl)anthranilate isomerase (230 aa).

Belongs to the TrpF family.

It catalyses the reaction N-(5-phospho-beta-D-ribosyl)anthranilate = 1-(2-carboxyphenylamino)-1-deoxy-D-ribulose 5-phosphate. The protein operates within amino-acid biosynthesis; L-tryptophan biosynthesis; L-tryptophan from chorismate: step 3/5. The sequence is that of N-(5'-phosphoribosyl)anthranilate isomerase from Syntrophus aciditrophicus (strain SB).